Consider the following 202-residue polypeptide: GTP-binding protein rho1 (202 aa).

13–20 provides a ligand contact to GTP; that stretch reads GDGACGKT. Residues 35-43 carry the Effector region motif; that stretch reads YVPTVFENY. Residues 60 to 64 and 118 to 121 each bind GTP; these read DTAGQ and CKAD. A Cysteine methyl ester modification is found at Cys199. A lipid anchor (S-geranylgeranyl cysteine) is attached at Cys199. Positions 200–202 are cleaved as a propeptide — removed in mature form; the sequence is ILL.

It belongs to the small GTPase superfamily. Rho family.

It localises to the cell membrane. In terms of biological role, involved in the regulation of cell wall growth and actin cytoskeleton organization. Activates (1,3)-beta-D-glucan synthase. The protein is GTP-binding protein rho1 (rho1) of Schizosaccharomyces pombe (strain 972 / ATCC 24843) (Fission yeast).